The chain runs to 331 residues: Pantothenate kinase (331 aa).

109-116 serves as a coordination point for ATP; it reads GSVAVGKS.

The protein belongs to the prokaryotic pantothenate kinase family.

It localises to the cytoplasm. It catalyses the reaction (R)-pantothenate + ATP = (R)-4'-phosphopantothenate + ADP + H(+). It participates in cofactor biosynthesis; coenzyme A biosynthesis; CoA from (R)-pantothenate: step 1/5. In Sinorhizobium medicae (strain WSM419) (Ensifer medicae), this protein is Pantothenate kinase.